A 195-amino-acid chain; its full sequence is Elongation factor Ts (195 aa).

The tract at residues threonine 81–valine 84 is involved in Mg(2+) ion dislocation from EF-Tu.

It belongs to the EF-Ts family.

Its subcellular location is the cytoplasm. In terms of biological role, associates with the EF-Tu.GDP complex and induces the exchange of GDP to GTP. It remains bound to the aminoacyl-tRNA.EF-Tu.GTP complex up to the GTP hydrolysis stage on the ribosome. This is Elongation factor Ts from Rubrobacter xylanophilus (strain DSM 9941 / JCM 11954 / NBRC 16129 / PRD-1).